The sequence spans 464 residues: Glutamate--tRNA ligase (464 aa).

A 'HIGH' region motif is present at residues 9-19 (PSPTGYLHIGG). The short motif at 242–246 (KISKR) is the 'KMSKS' region element. An ATP-binding site is contributed by Lys245.

The protein belongs to the class-I aminoacyl-tRNA synthetase family. Glutamate--tRNA ligase type 1 subfamily. As to quaternary structure, monomer.

The protein resides in the cytoplasm. The enzyme catalyses tRNA(Glu) + L-glutamate + ATP = L-glutamyl-tRNA(Glu) + AMP + diphosphate. Functionally, catalyzes the attachment of glutamate to tRNA(Glu) in a two-step reaction: glutamate is first activated by ATP to form Glu-AMP and then transferred to the acceptor end of tRNA(Glu). This Neisseria meningitidis serogroup B (strain ATCC BAA-335 / MC58) protein is Glutamate--tRNA ligase.